A 358-amino-acid polypeptide reads, in one-letter code: Alanine racemase (358 aa).

Lys35 serves as the catalytic Proton acceptor; specific for D-alanine. Lys35 is modified (N6-(pyridoxal phosphate)lysine). Residue Arg130 coordinates substrate. Residue Tyr255 is the Proton acceptor; specific for L-alanine of the active site. Substrate is bound at residue Met303.

Belongs to the alanine racemase family. Pyridoxal 5'-phosphate serves as cofactor.

It carries out the reaction L-alanine = D-alanine. The protein operates within amino-acid biosynthesis; D-alanine biosynthesis; D-alanine from L-alanine: step 1/1. Catalyzes the interconversion of L-alanine and D-alanine. May also act on other amino acids. This Shewanella baltica (strain OS223) protein is Alanine racemase (alr).